The chain runs to 262 residues: Probable dihydroorotate dehydrogenase B (NAD(+)), electron transfer subunit (262 aa).

An FAD-binding FR-type domain is found at 4 to 97 (VKPIPAEVVE…RGPYGKPFEV (94 aa)). Residues cysteine 217, cysteine 222, cysteine 225, and cysteine 234 each coordinate [2Fe-2S] cluster.

It belongs to the PyrK family. In terms of assembly, heterotetramer of 2 PyrK and 2 PyrD type B subunits. [2Fe-2S] cluster serves as cofactor. FAD is required as a cofactor.

It functions in the pathway pyrimidine metabolism; UMP biosynthesis via de novo pathway; orotate from (S)-dihydroorotate (NAD(+) route): step 1/1. In terms of biological role, responsible for channeling the electrons from the oxidation of dihydroorotate from the FMN redox center in the PyrD type B subunit to the ultimate electron acceptor NAD(+). The protein is Probable dihydroorotate dehydrogenase B (NAD(+)), electron transfer subunit of Methanopyrus kandleri (strain AV19 / DSM 6324 / JCM 9639 / NBRC 100938).